The following is a 123-amino-acid chain: Ribonuclease P protein component (123 aa).

This sequence belongs to the RnpA family. Consists of a catalytic RNA component (M1 or rnpB) and a protein subunit.

It carries out the reaction Endonucleolytic cleavage of RNA, removing 5'-extranucleotides from tRNA precursor.. Functionally, RNaseP catalyzes the removal of the 5'-leader sequence from pre-tRNA to produce the mature 5'-terminus. It can also cleave other RNA substrates such as 4.5S RNA. The protein component plays an auxiliary but essential role in vivo by binding to the 5'-leader sequence and broadening the substrate specificity of the ribozyme. The protein is Ribonuclease P protein component of Streptomyces bikiniensis.